The primary structure comprises 190 residues: ADP-ribosylation factor-like protein 6 (190 aa).

G2 is lipidated: N-myristoyl glycine. Residues 24–31, 69–73, and 130–133 each bind GTP; these read GLDNSGKT, DMAGQ, and NKMD.

It belongs to the small GTPase superfamily. Arf family. Specifically expressed in ciliated cells.

It is found in the cytoplasm. This Caenorhabditis elegans protein is ADP-ribosylation factor-like protein 6.